A 238-amino-acid chain; its full sequence is CD63 antigen (238 aa).

The Cytoplasmic portion of the chain corresponds to Ala2 to Lys11. The chain crosses the membrane as a helical span at residues Phe12–Gly32. Over Val33–Ser51 the chain is Extracellular. The helical transmembrane segment at Leu52–Cys72 threads the bilayer. Residues Cys73–Cys81 are Cytoplasmic-facing. A helical transmembrane segment spans residues Leu82–Ile102. The Extracellular segment spans residues Ala103–Val203. N-linked (GlcNAc...) asparagine glycans are attached at residues Asn130, Asn150, and Asn172. The chain crosses the membrane as a helical span at residues Leu204–Ala224. Residues Cys225–Met238 are Cytoplasmic-facing. The Lysosomal targeting motif signature appears at Gly234–Met238.

Belongs to the tetraspanin (TM4SF) family. As to quaternary structure, interacts with TIMP1 and ITGB1 and recruits TIMP1 to ITGB1. Interacts with CD9. Identified in a complex with CD9 and ITGB3. Interacts with PMEL. Interacts with KDR/VEGFR2; identified in a complex with ITGB1 and KDR/VEGFR2 and is required to recruit KDR to ITGB1 complexes. Interacts with SYT7. In terms of processing, palmitoylated at a low, basal level in unstimulated platelets. The level of palmitoylation increases when platelets are activated by thrombin (in vitro). As to expression, detected in platelets (at protein level). Dysplastic nevi, radial growth phase primary melanomas, hematopoietic cells, tissue macrophages.

Its subcellular location is the cell membrane. It is found in the lysosome membrane. It localises to the late endosome membrane. The protein resides in the endosome. The protein localises to the multivesicular body. Its subcellular location is the melanosome. It is found in the secreted. It localises to the extracellular exosome. The protein resides in the cell surface. Its function is as follows. Functions as a cell surface receptor for TIMP1 and plays a role in the activation of cellular signaling cascades. Plays a role in the activation of ITGB1 and integrin signaling, leading to the activation of AKT, FAK/PTK2 and MAP kinases. Promotes cell survival, reorganization of the actin cytoskeleton, cell adhesion, spreading and migration, via its role in the activation of AKT and FAK/PTK2. Plays a role in VEGFA signaling via its role in regulating the internalization of KDR/VEGFR2. Plays a role in intracellular vesicular transport processes, and is required for normal trafficking of the PMEL luminal domain that is essential for the development and maturation of melanocytes. Plays a role in the adhesion of leukocytes onto endothelial cells via its role in the regulation of SELP trafficking. May play a role in mast cell degranulation in response to Ms4a2/FceRI stimulation, but not in mast cell degranulation in response to other stimuli. This chain is CD63 antigen (CD63), found in Homo sapiens (Human).